Consider the following 196-residue polypeptide: Proteasome subunit beta 1 (196 aa).

The propeptide at 1 to 6 (MEELPA) is removed in mature form; by autocatalysis. The active-site Nucleophile is Thr-7.

The protein belongs to the peptidase T1B family. As to quaternary structure, the 20S proteasome core is composed of 14 alpha and 14 beta subunits that assemble into four stacked heptameric rings, resulting in a barrel-shaped structure. The two inner rings, each composed of seven catalytic beta subunits, are sandwiched by two outer rings, each composed of seven alpha subunits. The catalytic chamber with the active sites is on the inside of the barrel. Has a gated structure, the ends of the cylinder being occluded by the N-termini of the alpha-subunits. Is capped at one or both ends by the proteasome regulatory ATPase, PAN.

Its subcellular location is the cytoplasm. The catalysed reaction is Cleavage of peptide bonds with very broad specificity.. The formation of the proteasomal ATPase PAN-20S proteasome complex, via the docking of the C-termini of PAN into the intersubunit pockets in the alpha-rings, triggers opening of the gate for substrate entry. Interconversion between the open-gate and close-gate conformations leads to a dynamic regulation of the 20S proteasome proteolysis activity. Component of the proteasome core, a large protease complex with broad specificity involved in protein degradation. The sequence is that of Proteasome subunit beta 1 from Saccharolobus islandicus (strain Y.N.15.51 / Yellowstone #2) (Sulfolobus islandicus).